Consider the following 629-residue polypeptide: Phosphatidylinositol-3,5-bisphosphate 3-phosphatase MTMR8 (629 aa).

One can recognise a Myotubularin phosphatase domain in the interval 126–500; the sequence is GWKLIDLKVD…FSFQFWCGMY (375 aa). 3 residues coordinate a 1,2-diacyl-sn-glycero-3-phospho-(1D-myo-inositol-3,5-bisphosphate): Asn250, Asn275, and Ile276. The a 1,2-diacyl-sn-glycero-3-phospho-(1D-myo-inositol-3-phosphate) site is built by Asn250, Asn275, and Ile276. Residue Cys338 is the Phosphocysteine intermediate of the active site. Residues Ser339, Asp340, Gly341, Trp342, Asp343, Arg344, Lys380, and Arg384 each coordinate a 1,2-diacyl-sn-glycero-3-phospho-(1D-myo-inositol-3,5-bisphosphate). A 1,2-diacyl-sn-glycero-3-phospho-(1D-myo-inositol-3-phosphate)-binding residues include Ser339, Asp340, Gly341, Trp342, Asp343, and Arg344. Residues Ser339 and Asp340 each coordinate phosphate. Phosphate is bound by residues Trp342, Asp343, and Arg344. A 1,2-diacyl-sn-glycero-3-phospho-(1D-myo-inositol-3-phosphate) is bound at residue Arg384. A coiled-coil region spans residues 517-543; it reads LLSCMNQKIKLEDNASELENKLPFLDG.

This sequence belongs to the protein-tyrosine phosphatase family. Non-receptor class myotubularin subfamily. Homodimer.

It localises to the nucleus envelope. It catalyses the reaction a 1,2-diacyl-sn-glycero-3-phospho-(1D-myo-inositol-3,5-bisphosphate) + H2O = a 1,2-diacyl-sn-glycero-3-phospho-(1D-myo-inositol-5-phosphate) + phosphate. It carries out the reaction a 1,2-diacyl-sn-glycero-3-phospho-(1D-myo-inositol-3-phosphate) + H2O = a 1,2-diacyl-sn-glycero-3-phospho-(1D-myo-inositol) + phosphate. The catalysed reaction is 1,2-dioctanoyl-sn-glycero-3-phospho-(1D-myo-inositol-3,5-bisphosphate) + H2O = 1,2-dioctanoyl-sn-glycero-3-phospho-(1D-myo-inositol-5-phosphate) + phosphate. Functionally, lipid phosphatase that specifically dephosphorylates the D-3 position of phosphatidylinositol 3-phosphate and phosphatidylinositol 3,5-bisphosphate, generating phosphatidylinositol and phosphatidylinositol 5-phosphate. The protein is Phosphatidylinositol-3,5-bisphosphate 3-phosphatase MTMR8 of Gallus gallus (Chicken).